The following is a 372-amino-acid chain: MFKHLRRWFVTHIFGRSRQRARLVSKDGRCNIEFGNVDAQSRFIFFVDIWTTVLDLKWRYKMTVFITAFLGSWFLFGLLWYVVAYVHKDLPEFYPPDNRTPCVENINGMTSAFLFSLETQVTIGYGFRFVTEQCATAIFLLIFQSILGVIINSFMCGAILAKISRPKKRAKTITFSKNAVISKRGGKLCLLIRVANLRKSLLIGSHIYGKLLKTTITPEGETIILDQTNINFVVDAGNENLFFISPLTIYHIIDHNSPFFHMAAETLSQQDFELVVFLDGTVESTSATCQVRTSYIPEEVLWGYRFVPIVSKTKEGKYRVDFHNFGKTVEVETPHCAMCLYNEKDARARMKRGYDNPNFVLSEVDETDDTQM.

Over 1–58 (MFKHLRRWFVTHIFGRSRQRARLVSKDGRCNIEFGNVDAQSRFIFFVDIWTTVLDLKW) the chain is Cytoplasmic. Ser25 bears the Phosphoserine; by SGK1 mark. Residues 59-83 (RYKMTVFITAFLGSWFLFGLLWYVV) traverse the membrane as a helical segment. The Extracellular portion of the chain corresponds to 84-108 (AYVHKDLPEFYPPDNRTPCVENING). Asn98 carries N-linked (GlcNAc...) asparagine glycosylation. The helical; Pore-forming intramembrane region spans 109 to 120 (MTSAFLFSLETQ). The pore-forming intramembrane region spans 121–127 (VTIGYGF). A Selectivity filter motif is present at residues 122–127 (TIGYGF). The Extracellular portion of the chain corresponds to 128–136 (RFVTEQCAT). A helical transmembrane segment spans residues 137-158 (AIFLLIFQSILGVIINSFMCGA). Over 159–372 (ILAKISRPKK…EVDETDDTQM (214 aa)) the chain is Cytoplasmic. The tract at residues 161–188 (AKISRPKKRAKTITFSKNAVISKRGGKL) is polyphosphoinositide (PIP2)-binding. ATP is bound at residue 204–211 (GSHIYGKL).

The protein belongs to the inward rectifier-type potassium channel (TC 1.A.2.1) family. KCNJ1 subfamily. In terms of assembly, interacts with SGK1 and SLC9A3R2/NHERF2. Phosphorylation at Ser-25 by SGK1 is necessary for its expression at the cell membrane.

It localises to the cell membrane. The enzyme catalyses K(+)(in) = K(+)(out). With respect to regulation, inhibited by WNK3. Activated by phosphatidylinositol 4,5 biphosphate (PtdIns(4,5)P2). In terms of biological role, inward rectifier potassium channels are characterized by a greater tendency to allow potassium to flow into the cell rather than out of it. Their voltage dependence is regulated by the concentration of extracellular potassium; as external potassium is raised, the voltage range of the channel opening shifts to more positive voltages. The inward rectification is mainly due to the blockage of outward current by internal magnesium. This channel is activated by internal ATP and can be blocked by external barium. In the kidney, probably plays a major role in potassium homeostasis. The polypeptide is ATP-sensitive inward rectifier potassium channel 1 (Kcnj1) (Mus musculus (Mouse)).